The sequence spans 821 residues: Glycerol-3-phosphate acyltransferase (821 aa).

The HXXXXD motif motif lies at 310–315 (CHRSHM).

Belongs to the GPAT/DAPAT family.

The protein resides in the cell membrane. It catalyses the reaction sn-glycerol 3-phosphate + an acyl-CoA = a 1-acyl-sn-glycero-3-phosphate + CoA. Its pathway is phospholipid metabolism; CDP-diacylglycerol biosynthesis; CDP-diacylglycerol from sn-glycerol 3-phosphate: step 1/3. This Baumannia cicadellinicola subsp. Homalodisca coagulata protein is Glycerol-3-phosphate acyltransferase.